The following is a 73-amino-acid chain: Signaling peptide TAXIMIN 2 (73 aa).

Positions Met1–Ala27 are cleaved as a signal peptide.

In terms of tissue distribution, confined to the vasculature of various organs, including seedling roots, leaves, cotyledons, sepals and petals. Also accumulates in root hair cells.

The protein localises to the secreted. In terms of biological role, signaling peptide involved in the regulation of lateral organs separation. The chain is Signaling peptide TAXIMIN 2 from Arabidopsis thaliana (Mouse-ear cress).